The following is a 229-amino-acid chain: 4-hydroxy-tetrahydrodipicolinate reductase (229 aa).

Residues 10–15, 78–80, and 102–105 each bind NAD(+); these read GSAGRM, GTT, and SSNM. H133 (proton donor/acceptor) is an active-site residue. Position 134 (H134) interacts with (S)-2,3,4,5-tetrahydrodipicolinate. The active-site Proton donor is the K137. Position 143 to 144 (143 to 144) interacts with (S)-2,3,4,5-tetrahydrodipicolinate; that stretch reads GT.

The protein belongs to the DapB family.

The protein localises to the cytoplasm. The enzyme catalyses (S)-2,3,4,5-tetrahydrodipicolinate + NAD(+) + H2O = (2S,4S)-4-hydroxy-2,3,4,5-tetrahydrodipicolinate + NADH + H(+). It carries out the reaction (S)-2,3,4,5-tetrahydrodipicolinate + NADP(+) + H2O = (2S,4S)-4-hydroxy-2,3,4,5-tetrahydrodipicolinate + NADPH + H(+). It functions in the pathway amino-acid biosynthesis; L-lysine biosynthesis via DAP pathway; (S)-tetrahydrodipicolinate from L-aspartate: step 4/4. Its function is as follows. Catalyzes the conversion of 4-hydroxy-tetrahydrodipicolinate (HTPA) to tetrahydrodipicolinate. The chain is 4-hydroxy-tetrahydrodipicolinate reductase from Bdellovibrio bacteriovorus (strain ATCC 15356 / DSM 50701 / NCIMB 9529 / HD100).